A 919-amino-acid chain; its full sequence is Alpha-amylase (919 aa).

Residues 1-33 form the signal peptide; that stretch reads MPATRRTARVRRVAAVTVTALAAALLPPLAARA. Residues Asn-182 and Asp-281 each coordinate Ca(2+). The Nucleophile role is filled by Asp-312. His-316 is a binding site for Ca(2+). Residue Glu-346 is the Proton donor of the active site. Positions 704–729 are disordered; the sequence is ASGRLHHRHPARRGGAHRRLPGPRGR. Residues 707-724 are compositionally biased toward basic residues; sequence RLHHRHPARRGGAHRRLP.

It belongs to the glycosyl hydrolase 13 family. In terms of assembly, monomer. Requires Ca(2+) as cofactor.

Its subcellular location is the secreted. The catalysed reaction is Endohydrolysis of (1-&gt;4)-alpha-D-glucosidic linkages in polysaccharides containing three or more (1-&gt;4)-alpha-linked D-glucose units.. The chain is Alpha-amylase (amy) from Streptomyces lividans.